The sequence spans 117 residues: MIGPSRGLRIMVATQPVDFRRGMNGLVALVGSALLADPYCGDIFVFRAKRCDRLRCIYWDGSGMILSTKWLESGKFIFPPVKDGALHMSPEEFSLLVAGLDWTRVKRKPVKRPTKVA.

It belongs to the transposase 34 family.

This is an uncharacterized protein from Sinorhizobium fredii (strain NBRC 101917 / NGR234).